Reading from the N-terminus, the 491-residue chain is Probable cytosol aminopeptidase (491 aa).

2 residues coordinate Mn(2+): Lys264 and Asp269. Lys276 is a catalytic residue. Mn(2+) contacts are provided by Asp287, Asp346, and Glu348. Arg350 is a catalytic residue.

The protein belongs to the peptidase M17 family. Requires Mn(2+) as cofactor.

The protein localises to the cytoplasm. The catalysed reaction is Release of an N-terminal amino acid, Xaa-|-Yaa-, in which Xaa is preferably Leu, but may be other amino acids including Pro although not Arg or Lys, and Yaa may be Pro. Amino acid amides and methyl esters are also readily hydrolyzed, but rates on arylamides are exceedingly low.. The enzyme catalyses Release of an N-terminal amino acid, preferentially leucine, but not glutamic or aspartic acids.. In terms of biological role, presumably involved in the processing and regular turnover of intracellular proteins. Catalyzes the removal of unsubstituted N-terminal amino acids from various peptides. This is Probable cytosol aminopeptidase from Xylella fastidiosa (strain 9a5c).